The sequence spans 359 residues: 3-dehydroquinate synthase (359 aa).

Residues 71 to 76 (DGEQFK), 105 to 109 (GVIGD), 129 to 130 (TT), lysine 142, lysine 151, and 169 to 172 (CLQT) each bind NAD(+). The Zn(2+) site is built by glutamate 184, histidine 247, and histidine 264.

It belongs to the sugar phosphate cyclases superfamily. Dehydroquinate synthase family. NAD(+) is required as a cofactor. The cofactor is Co(2+). It depends on Zn(2+) as a cofactor.

It is found in the cytoplasm. The enzyme catalyses 7-phospho-2-dehydro-3-deoxy-D-arabino-heptonate = 3-dehydroquinate + phosphate. The protein operates within metabolic intermediate biosynthesis; chorismate biosynthesis; chorismate from D-erythrose 4-phosphate and phosphoenolpyruvate: step 2/7. Functionally, catalyzes the conversion of 3-deoxy-D-arabino-heptulosonate 7-phosphate (DAHP) to dehydroquinate (DHQ). This chain is 3-dehydroquinate synthase, found in Shewanella oneidensis (strain ATCC 700550 / JCM 31522 / CIP 106686 / LMG 19005 / NCIMB 14063 / MR-1).